Consider the following 85-residue polypeptide: uncharacterized protein (85 aa).

The first 19 residues, 1–19 (MKTIFTVGAVVLATCLLSG), serve as a signal peptide directing secretion. Cysteine 20 carries N-palmitoyl cysteine lipidation. Cysteine 20 is lipidated: S-diacylglycerol cysteine.

Its subcellular location is the cell outer membrane. This is an uncharacterized protein from Escherichia coli (strain K12).